We begin with the raw amino-acid sequence, 61 residues long: MSQLRVTQVRSTIGAIEKHKRTVRALGLRRIRDSRVHRDTPQIRGMIAKVRHLVRVEEVED.

Belongs to the universal ribosomal protein uL30 family. In terms of assembly, part of the 50S ribosomal subunit.

This chain is Large ribosomal subunit protein uL30, found in Rubrobacter xylanophilus (strain DSM 9941 / JCM 11954 / NBRC 16129 / PRD-1).